A 158-amino-acid polypeptide reads, in one-letter code: Cytochrome c-type biogenesis protein CcmE (158 aa).

The Cytoplasmic segment spans residues methionine 1–arginine 8. Residues leucine 9–alanine 29 traverse the membrane as a helical; Signal-anchor for type II membrane protein segment. The Periplasmic portion of the chain corresponds to leucine 30–arginine 158. Positions 123 and 127 each coordinate heme. The tract at residues alanine 139–arginine 158 is disordered.

It belongs to the CcmE/CycJ family.

The protein localises to the cell inner membrane. Its function is as follows. Heme chaperone required for the biogenesis of c-type cytochromes. Transiently binds heme delivered by CcmC and transfers the heme to apo-cytochromes in a process facilitated by CcmF and CcmH. The chain is Cytochrome c-type biogenesis protein CcmE from Maricaulis maris (strain MCS10) (Caulobacter maris).